Consider the following 46-residue polypeptide: Phoratoxin (46 aa).

Cystine bridges form between Cys-3-Cys-40, Cys-4-Cys-32, and Cys-16-Cys-26. Position 46 is a blocked carboxyl end (His) (His-46).

The protein belongs to the plant thionin (TC 1.C.44) family.

It localises to the secreted. Thionins are small plant proteins which are toxic to animal cells. They seem to exert their toxic effect at the level of the cell membrane. Their precise function is not known. The sequence is that of Phoratoxin from Phoradendron leucarpum subsp. tomentosum (California mistletoe).